The following is a 463-amino-acid chain: Glycine--tRNA ligase (463 aa).

2 residues coordinate substrate: Arg-98 and Glu-174. ATP-binding positions include 206 to 208, 216 to 221, 290 to 291, and 334 to 337; these read RNE, FRTREF, EL, and GADR. 221–225 provides a ligand contact to substrate; sequence FEQME. 330 to 334 is a substrate binding site; the sequence is EPSLG.

Belongs to the class-II aminoacyl-tRNA synthetase family. As to quaternary structure, homodimer.

Its subcellular location is the cytoplasm. The catalysed reaction is tRNA(Gly) + glycine + ATP = glycyl-tRNA(Gly) + AMP + diphosphate. In terms of biological role, catalyzes the attachment of glycine to tRNA(Gly). In Staphylococcus saprophyticus subsp. saprophyticus (strain ATCC 15305 / DSM 20229 / NCIMB 8711 / NCTC 7292 / S-41), this protein is Glycine--tRNA ligase.